We begin with the raw amino-acid sequence, 350 residues long: S-adenosylmethionine:tRNA ribosyltransferase-isomerase (350 aa).

Belongs to the QueA family. In terms of assembly, monomer.

The protein localises to the cytoplasm. It carries out the reaction 7-aminomethyl-7-carbaguanosine(34) in tRNA + S-adenosyl-L-methionine = epoxyqueuosine(34) in tRNA + adenine + L-methionine + 2 H(+). The protein operates within tRNA modification; tRNA-queuosine biosynthesis. Its function is as follows. Transfers and isomerizes the ribose moiety from AdoMet to the 7-aminomethyl group of 7-deazaguanine (preQ1-tRNA) to give epoxyqueuosine (oQ-tRNA). The polypeptide is S-adenosylmethionine:tRNA ribosyltransferase-isomerase (Aliivibrio salmonicida (strain LFI1238) (Vibrio salmonicida (strain LFI1238))).